The chain runs to 124 residues: Holo-[acyl-carrier-protein] synthase (124 aa).

Positions 8 and 57 each coordinate Mg(2+).

The protein belongs to the P-Pant transferase superfamily. AcpS family. Requires Mg(2+) as cofactor.

The protein localises to the cytoplasm. It carries out the reaction apo-[ACP] + CoA = holo-[ACP] + adenosine 3',5'-bisphosphate + H(+). Transfers the 4'-phosphopantetheine moiety from coenzyme A to a Ser of acyl-carrier-protein. The polypeptide is Holo-[acyl-carrier-protein] synthase (Leptospira borgpetersenii serovar Hardjo-bovis (strain JB197)).